Reading from the N-terminus, the 181-residue chain is MSFVPTKVFFTKGVGRHKEYLSSFELALRDAKIEKCNLVTVSSIFPPKCERISVEEGLKHLKPGQITFAVMARNSTNENNRLISASVGVALPADETQYGYLSEHHPYGETAEHSGEYAEDLAATMLATTLGIEFDPNKDWDEREGIYKMSGKIVNSFNITESAEGETGLWTTVISCAVLLP.

Position 43 is a pyruvic acid (Ser) (Ser-43).

This sequence belongs to the PdaD family. Pyruvate is required as a cofactor.

The catalysed reaction is L-arginine + H(+) = agmatine + CO2. This Chlorobaculum parvum (strain DSM 263 / NCIMB 8327) (Chlorobium vibrioforme subsp. thiosulfatophilum) protein is Probable pyruvoyl-dependent arginine decarboxylase.